Consider the following 513-residue polypeptide: ATP synthase subunit alpha (513 aa).

169-176 (GDRQTGKT) serves as a coordination point for ATP.

It belongs to the ATPase alpha/beta chains family. As to quaternary structure, F-type ATPases have 2 components, CF(1) - the catalytic core - and CF(0) - the membrane proton channel. CF(1) has five subunits: alpha(3), beta(3), gamma(1), delta(1), epsilon(1). CF(0) has three main subunits: a(1), b(2) and c(9-12). The alpha and beta chains form an alternating ring which encloses part of the gamma chain. CF(1) is attached to CF(0) by a central stalk formed by the gamma and epsilon chains, while a peripheral stalk is formed by the delta and b chains.

It is found in the cell inner membrane. The catalysed reaction is ATP + H2O + 4 H(+)(in) = ADP + phosphate + 5 H(+)(out). In terms of biological role, produces ATP from ADP in the presence of a proton gradient across the membrane. The alpha chain is a regulatory subunit. In Haemophilus influenzae (strain PittGG), this protein is ATP synthase subunit alpha.